A 348-amino-acid polypeptide reads, in one-letter code: Holliday junction branch migration complex subunit RuvB (348 aa).

The segment at 4 to 198 (TTDYGASNTG…FGFTAHLDFY (195 aa)) is large ATPase domain (RuvB-L). Residues Leu37, Arg38, Gly79, Lys82, Thr83, Thr84, 145 to 147 (EDF), Arg188, Tyr198, and Arg235 contribute to the ATP site. Thr83 is a binding site for Mg(2+). The tract at residues 199–269 (PHEELEKLIE…DVKEALALYQ (71 aa)) is small ATPAse domain (RuvB-S). A head domain (RuvB-H) region spans residues 272–348 (SEGLDRLDIA…DIIFGNYAQR (77 aa)). DNA-binding residues include Arg327 and Arg332.

Belongs to the RuvB family. In terms of assembly, homohexamer. Forms an RuvA(8)-RuvB(12)-Holliday junction (HJ) complex. HJ DNA is sandwiched between 2 RuvA tetramers; dsDNA enters through RuvA and exits via RuvB. An RuvB hexamer assembles on each DNA strand where it exits the tetramer. Each RuvB hexamer is contacted by two RuvA subunits (via domain III) on 2 adjacent RuvB subunits; this complex drives branch migration. In the full resolvosome a probable DNA-RuvA(4)-RuvB(12)-RuvC(2) complex forms which resolves the HJ.

It is found in the cytoplasm. It catalyses the reaction ATP + H2O = ADP + phosphate + H(+). Functionally, the RuvA-RuvB-RuvC complex processes Holliday junction (HJ) DNA during genetic recombination and DNA repair, while the RuvA-RuvB complex plays an important role in the rescue of blocked DNA replication forks via replication fork reversal (RFR). RuvA specifically binds to HJ cruciform DNA, conferring on it an open structure. The RuvB hexamer acts as an ATP-dependent pump, pulling dsDNA into and through the RuvAB complex. RuvB forms 2 homohexamers on either side of HJ DNA bound by 1 or 2 RuvA tetramers; 4 subunits per hexamer contact DNA at a time. Coordinated motions by a converter formed by DNA-disengaged RuvB subunits stimulates ATP hydrolysis and nucleotide exchange. Immobilization of the converter enables RuvB to convert the ATP-contained energy into a lever motion, pulling 2 nucleotides of DNA out of the RuvA tetramer per ATP hydrolyzed, thus driving DNA branch migration. The RuvB motors rotate together with the DNA substrate, which together with the progressing nucleotide cycle form the mechanistic basis for DNA recombination by continuous HJ branch migration. Branch migration allows RuvC to scan DNA until it finds its consensus sequence, where it cleaves and resolves cruciform DNA. In Bifidobacterium longum (strain DJO10A), this protein is Holliday junction branch migration complex subunit RuvB.